We begin with the raw amino-acid sequence, 319 residues long: Acetyl-coenzyme A carboxylase carboxyl transferase subunit alpha (319 aa).

The CoA carboxyltransferase C-terminal domain maps to 32–293 (NVDTEVRALE…KAVLLNELEA (262 aa)).

The protein belongs to the AccA family. Acetyl-CoA carboxylase is a heterohexamer composed of biotin carboxyl carrier protein (AccB), biotin carboxylase (AccC) and two subunits each of ACCase subunit alpha (AccA) and ACCase subunit beta (AccD).

It is found in the cytoplasm. It catalyses the reaction N(6)-carboxybiotinyl-L-lysyl-[protein] + acetyl-CoA = N(6)-biotinyl-L-lysyl-[protein] + malonyl-CoA. The protein operates within lipid metabolism; malonyl-CoA biosynthesis; malonyl-CoA from acetyl-CoA: step 1/1. Functionally, component of the acetyl coenzyme A carboxylase (ACC) complex. First, biotin carboxylase catalyzes the carboxylation of biotin on its carrier protein (BCCP) and then the CO(2) group is transferred by the carboxyltransferase to acetyl-CoA to form malonyl-CoA. This is Acetyl-coenzyme A carboxylase carboxyl transferase subunit alpha from Xylella fastidiosa (strain 9a5c).